The chain runs to 183 residues: Ribulose bisphosphate carboxylase small subunit, chloroplastic 5 (183 aa).

A chloroplast-targeting transit peptide spans Met-1–Arg-42.

Belongs to the RuBisCO small chain family. Heterohexadecamer of 8 large and 8 small subunits.

Its subcellular location is the plastid. It localises to the chloroplast. Functionally, ruBisCO catalyzes two reactions: the carboxylation of D-ribulose 1,5-bisphosphate, the primary event in carbon dioxide fixation, as well as the oxidative fragmentation of the pentose substrate. Both reactions occur simultaneously and in competition at the same active site. Although the small subunit is not catalytic it is essential for maximal activity. This chain is Ribulose bisphosphate carboxylase small subunit, chloroplastic 5, found in Acetabularia acetabulum (Mermaid's wine glass).